A 117-amino-acid polypeptide reads, in one-letter code: Hemerythrin subunit beta (117 aa).

The Fe cation site is built by H24, H53, E57, H72, H76, H105, and D110.

This sequence belongs to the hemerythrin family. Octamer composed of two types of chains: alpha and beta.

In terms of biological role, hemerythrin is a respiratory protein in blood cells of certain marine worms. The oxygen-binding site in each chain contains two iron atoms. This chain is Hemerythrin subunit beta, found in Lingula anatina (Brachiopod).